We begin with the raw amino-acid sequence, 286 residues long: Ribose-5-phosphate isomerase (286 aa).

It belongs to the ribose 5-phosphate isomerase family.

Its subcellular location is the cytoplasm. The catalysed reaction is aldehydo-D-ribose 5-phosphate = D-ribulose 5-phosphate. It participates in carbohydrate degradation; pentose phosphate pathway; D-ribose 5-phosphate from D-ribulose 5-phosphate (non-oxidative stage): step 1/1. This is Ribose-5-phosphate isomerase (RKI1) from Mycosarcoma maydis (Corn smut fungus).